The chain runs to 225 residues: UPF0758 protein BcerKBAB4_4299 (225 aa).

An MPN domain is found at 103–225 (SIRSPEDCAS…FVSLKEKGHI (123 aa)). Positions 174, 176, and 187 each coordinate Zn(2+). The JAMM motif motif lies at 174-187 (HNHPSGDPAPSRED).

The protein belongs to the UPF0758 family.

In Bacillus mycoides (strain KBAB4) (Bacillus weihenstephanensis), this protein is UPF0758 protein BcerKBAB4_4299.